Reading from the N-terminus, the 623-residue chain is Glutathione import ATP-binding protein GsiA (623 aa).

ABC transporter domains are found at residues 15–269 (VENL…RALL) and 314–564 (LRVR…RKLL). ATP contacts are provided by residues 49–56 (GESGSGKS) and 357–364 (GESGSGKS).

Belongs to the ABC transporter superfamily. Glutathione importer (TC 3.A.1.5.11) family. As to quaternary structure, the complex is composed of two ATP-binding proteins (GsiA), two transmembrane proteins (GsiC and GsiD) and a solute-binding protein (GsiB).

The protein resides in the cell inner membrane. It catalyses the reaction glutathione(out) + ATP + H2O = glutathione(in) + ADP + phosphate + H(+). Functionally, part of the ABC transporter complex GsiABCD involved in glutathione import. Responsible for energy coupling to the transport system. This Escherichia coli O157:H7 protein is Glutathione import ATP-binding protein GsiA.